The sequence spans 446 residues: Adenylosuccinate synthetase (446 aa).

GTP is bound by residues glycine 20–lysine 26 and glycine 48–threonine 50. Residue aspartate 21 is the Proton acceptor of the active site. Positions 21 and 48 each coordinate Mg(2+). IMP is bound by residues aspartate 21–lysine 24, asparagine 46–histidine 49, threonine 137, arginine 151, glutamine 232, threonine 247, and arginine 319. Histidine 49 functions as the Proton donor in the catalytic mechanism. Serine 315–arginine 321 is a substrate binding site. Residues arginine 321, lysine 347–aspartate 349, and serine 429–glycine 431 each bind GTP.

It belongs to the adenylosuccinate synthetase family. In terms of assembly, homodimer. It depends on Mg(2+) as a cofactor.

The protein localises to the cytoplasm. The enzyme catalyses IMP + L-aspartate + GTP = N(6)-(1,2-dicarboxyethyl)-AMP + GDP + phosphate + 2 H(+). It functions in the pathway purine metabolism; AMP biosynthesis via de novo pathway; AMP from IMP: step 1/2. Plays an important role in the de novo pathway of purine nucleotide biosynthesis. Catalyzes the first committed step in the biosynthesis of AMP from IMP. In Ralstonia nicotianae (strain ATCC BAA-1114 / GMI1000) (Ralstonia solanacearum), this protein is Adenylosuccinate synthetase.